Consider the following 257-residue polypeptide: LexA repressor (257 aa).

The segment at residues 64 to 84 (FREIGEAAGLKSPSSVKHQLQ) is a DNA-binding region (H-T-H motif). Active-site for autocatalytic cleavage activity residues include S181 and K218.

Belongs to the peptidase S24 family. In terms of assembly, homodimer.

The catalysed reaction is Hydrolysis of Ala-|-Gly bond in repressor LexA.. Its function is as follows. Represses a number of genes involved in the response to DNA damage (SOS response), including recA and lexA. In the presence of single-stranded DNA, RecA interacts with LexA causing an autocatalytic cleavage which disrupts the DNA-binding part of LexA, leading to derepression of the SOS regulon and eventually DNA repair. The protein is LexA repressor of Bifidobacterium adolescentis (strain ATCC 15703 / DSM 20083 / NCTC 11814 / E194a).